We begin with the raw amino-acid sequence, 213 residues long: Uridine kinase (213 aa).

12 to 19 (GGSCSGKT) provides a ligand contact to ATP.

It belongs to the uridine kinase family.

The protein localises to the cytoplasm. The enzyme catalyses uridine + ATP = UMP + ADP + H(+). It catalyses the reaction cytidine + ATP = CMP + ADP + H(+). Its pathway is pyrimidine metabolism; CTP biosynthesis via salvage pathway; CTP from cytidine: step 1/3. The protein operates within pyrimidine metabolism; UMP biosynthesis via salvage pathway; UMP from uridine: step 1/1. This chain is Uridine kinase (udk), found in Mycoplasma genitalium (strain ATCC 33530 / DSM 19775 / NCTC 10195 / G37) (Mycoplasmoides genitalium).